Reading from the N-terminus, the 224-residue chain is Retinoschisin (224 aa).

An N-terminal signal peptide occupies residues 1 to 23; it reads MPHKIEGFFLLLLFGYEATLGLS. Positions 63–219 constitute an F5/8 type C domain; the sequence is CPYHKPLGFE…IAIRMELLEC (157 aa). 2 disulfide bridges follow: Cys63-Cys219 and Cys110-Cys142.

In terms of assembly, homooctamer of 4 homodimers; disulfide-linked. The homooctamer has a flat, cogwheel structure with a diameter of about 14 nm. Two stacked octamers can assemble to form a hexadecamer. Detected in the eye cup. Detected in retina, in the inner segment of the photoreceptors, the inner nuclear layer, the inner plexiform layer and the ganglion cell layer (at protein level). Restricted to the retina. At the mRNA level, detected only within the photoreceptor cell layer, most prominently within the inner segments of the photoreceptors. Undetectable in the inner plexiform layers and the inner nuclear layer.

The protein localises to the secreted. Its subcellular location is the cell membrane. Its function is as follows. Binds negatively charged membrane lipids, such as phosphatidylserine and phosphoinositides. May play a role in cell-cell adhesion processes in the retina, via homomeric interaction between octamers present on the surface of two neighboring cells. Required for normal structure and function of the retina. The chain is Retinoschisin (Rs1) from Mus musculus (Mouse).